The sequence spans 379 residues: Tryptophan--tRNA ligase, mitochondrial (379 aa).

ATP is bound by residues Gln-42 and 48–51; that span reads HLGN. Residues 43–51 carry the 'HIGH' region motif; sequence PTGCFHLGN. Residue Asp-184 coordinates L-tryptophan. ATP-binding positions include 196–198, Val-235, 244–248, and Lys-247; these read GDD and KMSKS. The 'KMSKS' region motif lies at 244–248; that stretch reads KMSKS.

This sequence belongs to the class-I aminoacyl-tRNA synthetase family. Homodimer.

It is found in the mitochondrion matrix. It carries out the reaction tRNA(Trp) + L-tryptophan + ATP = L-tryptophyl-tRNA(Trp) + AMP + diphosphate + H(+). Its function is as follows. Mitochondrial aminoacyl-tRNA synthetase that catalyzes the attachment of tryptophan to tRNA(Trp). The protein is Tryptophan--tRNA ligase, mitochondrial (MSW1) of Saccharomyces cerevisiae (strain ATCC 204508 / S288c) (Baker's yeast).